Here is a 715-residue protein sequence, read N- to C-terminus: Ribosomal RNA large subunit methyltransferase K/L (715 aa).

The THUMP domain maps to 43 to 154; sequence TQYRALLWSR…RDDLVLSLDL (112 aa).

This sequence belongs to the methyltransferase superfamily. RlmKL family.

The protein localises to the cytoplasm. The enzyme catalyses guanosine(2445) in 23S rRNA + S-adenosyl-L-methionine = N(2)-methylguanosine(2445) in 23S rRNA + S-adenosyl-L-homocysteine + H(+). It catalyses the reaction guanosine(2069) in 23S rRNA + S-adenosyl-L-methionine = N(2)-methylguanosine(2069) in 23S rRNA + S-adenosyl-L-homocysteine + H(+). Functionally, specifically methylates the guanine in position 2445 (m2G2445) and the guanine in position 2069 (m7G2069) of 23S rRNA. This is Ribosomal RNA large subunit methyltransferase K/L from Mannheimia succiniciproducens (strain KCTC 0769BP / MBEL55E).